Reading from the N-terminus, the 181-residue chain is Translation initiation factor IF-3 (181 aa).

This sequence belongs to the IF-3 family. Monomer.

It localises to the cytoplasm. Its function is as follows. IF-3 binds to the 30S ribosomal subunit and shifts the equilibrium between 70S ribosomes and their 50S and 30S subunits in favor of the free subunits, thus enhancing the availability of 30S subunits on which protein synthesis initiation begins. The sequence is that of Translation initiation factor IF-3 from Cereibacter sphaeroides (strain ATCC 17023 / DSM 158 / JCM 6121 / CCUG 31486 / LMG 2827 / NBRC 12203 / NCIMB 8253 / ATH 2.4.1.) (Rhodobacter sphaeroides).